A 471-amino-acid chain; its full sequence is Cysteine--tRNA ligase (471 aa).

A Zn(2+)-binding site is contributed by Cys29. Positions Pro31 to Asn41 match the 'HIGH' region motif. The Zn(2+) site is built by Cys209, His234, and Glu238. A 'KMSKS' region motif is present at residues Lys266 to Ser270. Lys269 lines the ATP pocket.

Belongs to the class-I aminoacyl-tRNA synthetase family. Monomer. Zn(2+) is required as a cofactor.

It is found in the cytoplasm. The enzyme catalyses tRNA(Cys) + L-cysteine + ATP = L-cysteinyl-tRNA(Cys) + AMP + diphosphate. The sequence is that of Cysteine--tRNA ligase from Listeria monocytogenes serotype 4b (strain CLIP80459).